We begin with the raw amino-acid sequence, 266 residues long: Chymotrypsin-like elastase family member 1 (266 aa).

The N-terminal stretch at 1 to 16 (MLRFLVFATLVLYGHS) is a signal peptide. The propeptide at 17 to 26 (TQDFPETNAR) is activation peptide. The Peptidase S1 domain occupies 27-264 (VVGGTEAGRN…YISWINKTIA (238 aa)). Residues Cys-56 and Cys-72 are joined by a disulfide bond. His-71 functions as the Charge relay system in the catalytic mechanism. Ca(2+) contacts are provided by Asp-85, Asn-87, Gln-90, and Glu-95. An N-linked (GlcNAc...) asparagine glycan is attached at Asn-87. Catalysis depends on Asp-119, which acts as the Charge relay system. Cystine bridges form between Cys-153–Cys-220, Cys-184–Cys-200, and Cys-210–Cys-240. The active-site Charge relay system is Ser-214. Asn-241 and Asn-260 each carry an N-linked (GlcNAc...) asparagine glycan.

Belongs to the peptidase S1 family. Elastase subfamily. Ca(2+) serves as cofactor.

The protein localises to the secreted. It carries out the reaction Hydrolysis of proteins, including elastin. Preferential cleavage: Ala-|-Xaa.. Its function is as follows. Serine proteases that hydrolyze many proteins in addition to elastin. The chain is Chymotrypsin-like elastase family member 1 (CELA1) from Macaca fascicularis (Crab-eating macaque).